The following is a 589-amino-acid chain: Muscarinic acetylcholine receptor M3 (589 aa).

Residues 1–66 (MTLHSNSTTS…DPLGGHTIWQ (66 aa)) lie on the Extracellular side of the membrane. 5 N-linked (GlcNAc...) asparagine glycosylation sites follow: Asn-6, Asn-15, Asn-41, Asn-48, and Asn-52. The helical transmembrane segment at 67-90 (VVFIAFLTGFLALVTIIGNILVIV) threads the bilayer. The Cytoplasmic portion of the chain corresponds to 91-103 (AFKVNKQLKTVNN). A helical membrane pass occupies residues 104 to 129 (YFLLSLACADLIIGVISMNLFTTYII). Residues 130–141 (MNRWALGNLACD) lie on the Extracellular side of the membrane. A disulfide bond links Cys-140 and Cys-220. Residues 142-163 (LWLSIDYVASNASVMNLLVISF) form a helical membrane-spanning segment. At 164-183 (DRYFSITRPLTYRAKRTTKR) the chain is on the cytoplasmic side. Residues 184–205 (AGVMIGLAWVISFVLWAPAILF) form a helical membrane-spanning segment. At 206 to 228 (WQYFVGKRTVPPGECFIQFLSEP) the chain is on the extracellular side. Residues 229–251 (TITFGTAIAAFYMPVTIMTILYW) traverse the membrane as a helical segment. The Cytoplasmic segment spans residues 252 to 490 (RIYKETEKRT…SLIKEKKAAQ (239 aa)). The Basolateral sorting signal signature appears at 274 to 280 (AEAENFV). 2 disordered regions span residues 275 to 295 (EAEN…YELQ) and 323 to 356 (AEQM…EEDI). Residues 283–295 (TGSSRSCSSYELQ) show a composition bias toward polar residues. The segment covering 333–344 (SDSWNNNDAAAS) has biased composition (low complexity). Ser-384 carries the post-translational modification Phosphoserine. A helical membrane pass occupies residues 491-513 (TLSAILLAFIITWTPYNIMVLVN). At 514–525 (TFCDSCIPKTYW) the chain is on the extracellular side. A disulfide bridge connects residues Cys-516 and Cys-519. A helical transmembrane segment spans residues 526–545 (NLGYWLCYINSTVNPVCYAL). Residues 546 to 589 (CNKTFRTTFKMLLLCQCDKRKRRKQQYQQRQSVIFHKRVPEQAL) are Cytoplasmic-facing.

The protein belongs to the G-protein coupled receptor 1 family. Muscarinic acetylcholine receptor subfamily. CHRM3 sub-subfamily. Homodimer; the dimers can form tetramers. Interacts with NALCN. Interacts with TMEM147. In terms of tissue distribution, expressed in cerebral cortex, submandibular gland, hypothalamus, pancreas, liver, and ileum.

The protein resides in the cell membrane. Its subcellular location is the postsynaptic cell membrane. It localises to the basolateral cell membrane. It is found in the endoplasmic reticulum membrane. The muscarinic acetylcholine receptor mediates various cellular responses, including inhibition of adenylate cyclase, breakdown of phosphoinositides and modulation of potassium channels through the action of G proteins. Primary transducing effect is Pi turnover. The protein is Muscarinic acetylcholine receptor M3 (Chrm3) of Mus musculus (Mouse).